The following is a 242-amino-acid chain: NADPH-dependent pterin aldehyde reductase (242 aa).

N-acetylthreonine is present on Thr-2. Residue Leu-21–Ser-50 participates in NADP(+) binding. Ser-153 is a substrate binding site. The active-site Proton acceptor is the Tyr-166. Position 170 (Lys-170) interacts with NADP(+).

It belongs to the short-chain dehydrogenases/reductases (SDR) family. As to quaternary structure, homodimer. In terms of tissue distribution, mostly expressed in seeds, and, to a lower extent, in roots, leaves, flowers and siliques.

The protein resides in the cytoplasm. Functionally, NADPH-dependent pterin aldehyde reductase involved in pterin aldehyde salvage during folate turnover. Catalyzes the reduction of diverse aromatic and aliphatic aldehydes (e.g. acetaldehyde, n-propanal, 1-naphthaldehyde, benzaldehyde, cinnamaldehyde, n-butanal, n-hexanal, n-pentanal, 2-naphthaldehyde, n-octanal, n-nonanal and n-heptanal), in addition to the conversion of pterin-6-aldehyde (PtCHO) to 6-hydroxymethylpterin (PtCH(2)OH), and the conversion of dihydropterin-6-aldehyde (H(2)PtCHO) to 6-hydroxymethyldihydropterin (H(2)PtCH(2)OH). Cannot reduce the pterin ring. This chain is NADPH-dependent pterin aldehyde reductase, found in Arabidopsis thaliana (Mouse-ear cress).